Consider the following 447-residue polypeptide: Na(+)-translocating NADH-quinone reductase subunit A (447 aa).

This sequence belongs to the NqrA family. Composed of six subunits; NqrA, NqrB, NqrC, NqrD, NqrE and NqrF.

It carries out the reaction a ubiquinone + n Na(+)(in) + NADH + H(+) = a ubiquinol + n Na(+)(out) + NAD(+). NQR complex catalyzes the reduction of ubiquinone-1 to ubiquinol by two successive reactions, coupled with the transport of Na(+) ions from the cytoplasm to the periplasm. NqrA to NqrE are probably involved in the second step, the conversion of ubisemiquinone to ubiquinol. The chain is Na(+)-translocating NADH-quinone reductase subunit A from Hahella chejuensis (strain KCTC 2396).